Reading from the N-terminus, the 313-residue chain is Protein sprouty homolog 2 (313 aa).

Residues 1 to 14 (METRVQHGSGSQAL) are compositionally biased toward polar residues. Disordered stretches follow at residues 1–31 (METRVQHGSGSQALLQARRDSGRPHGEPDLR) and 54–146 (EYTE…VADG). Composition is skewed to basic and acidic residues over residues 17 to 31 (ARRDSGRPHGEPDLR) and 78 to 89 (KSERPHGLPEHR). Over residues 108-131 (SRSISTVSTGSRSSTRTSTSSNSS) the composition is skewed to low complexity. Residues 132 to 141 (EQRLLGSSSG) show a composition bias toward polar residues. The SPR domain maps to 175-289 (RCEDCGKCKC…CYDRVNRPGC (115 aa)).

It belongs to the sprouty family. As to expression, brain and interlimb region.

Its subcellular location is the cytoplasm. The protein localises to the membrane. Functionally, acts as an antagonist of FGF-induced retinal lens fiber differentiation. Inhibits TGFB-induced epithelial-to-mesenchymal transition in retinal lens epithelial cells. May play an important role in FGF-mediated patterning of the mid/hindbrain region by acting to modulate the signaling effects of FGF8. The polypeptide is Protein sprouty homolog 2 (SPRY2) (Gallus gallus (Chicken)).